The sequence spans 436 residues: Indole-3-acetyl-aspartic acid hydrolase (436 aa).

This sequence belongs to the peptidase M20 family. As to quaternary structure, monomer.

The catalysed reaction is (indol-3-yl)acetyl-L-aspartate + H2O = (indol-3-yl)acetate + L-aspartate. Functionally, hydrolyzes indole-3-acetyl-aspartate (IAA-Asp) to indole-3-acetic acid (IAA). Shows an exclusively high substrate specificity for IAA-Asp. The chain is Indole-3-acetyl-aspartic acid hydrolase from Enterobacter agglomerans (Erwinia herbicola).